The chain runs to 224 residues: Urease accessory protein UreF (224 aa).

This sequence belongs to the UreF family. UreD, UreF and UreG form a complex that acts as a GTP-hydrolysis-dependent molecular chaperone, activating the urease apoprotein by helping to assemble the nickel containing metallocenter of UreC. The UreE protein probably delivers the nickel.

It is found in the cytoplasm. In terms of biological role, required for maturation of urease via the functional incorporation of the urease nickel metallocenter. In Klebsiella pneumoniae subsp. pneumoniae (strain ATCC 700721 / MGH 78578), this protein is Urease accessory protein UreF.